Reading from the N-terminus, the 141-residue chain is ATP synthase epsilon chain (141 aa).

The protein belongs to the ATPase epsilon chain family. As to quaternary structure, F-type ATPases have 2 components, CF(1) - the catalytic core - and CF(0) - the membrane proton channel. CF(1) has five subunits: alpha(3), beta(3), gamma(1), delta(1), epsilon(1). CF(0) has three main subunits: a, b and c.

The protein localises to the cell inner membrane. In terms of biological role, produces ATP from ADP in the presence of a proton gradient across the membrane. This is ATP synthase epsilon chain from Desulfatibacillum aliphaticivorans.